The following is a 389-amino-acid chain: Probable nitrate transporter NarT (389 aa).

12 helical membrane passes run 14-34, 45-65, 69-89, 97-117, 139-159, 161-181, 211-231, 246-266, 268-288, 294-314, 331-351, and 353-373; these read TLSL…MPFI, ISII…PFGY, IVGA…PIFF, GMLM…SVGV, GNIG…IIGW, TTVR…FIFG, WYFI…NYLV, GVFI…GDKF, AVKV…ILGI, LFTV…GLIF, IVSM…TYVA, and LTGS…IALF.

Belongs to the major facilitator superfamily. Nitrate/nitrite porter (TC 2.A.1.8) family.

It is found in the cell membrane. Probably required for nitrate uptake under anoxic conditions. Also possibly involved in excretion of nitrite produced by the dissimilatory reduction of nitrate. This is Probable nitrate transporter NarT (narT) from Staphylococcus aureus (strain JH9).